The following is a 2253-amino-acid chain: MKRHQFKSCIFELREILREIKNSRYFLDSWTKFDSVVSFTHIFFHQERFVKLLGPQTWSVLLSRDSQGSTSNRYFTIKGVVLLVVAVLIYRINNRNMVERKNLYLMGLLPIPMNSIGPRNDTLEESFWSPNINRLIVSLLYLPKGKKISESCFMDPKESTWVLPITQKCIMPESNWGSRWWRNWIGKKRDSSCKISNETVAGIEISFKEKDIKYLEFLFVSYMDDPIRKDHGWELFDRVSPRKKRNIINLNSGQLFEILAKHLICYLMSAFREKRPIEVEGFLKQQGAEATIPSNDIEHVSHLFSRNKWDISLQNCAQFHMWQFHQDLFVSWGKNQHESDFLRNVSRENLIWLDNMWLVNKDRFFSKVRNVSSNIQYDSTRSIFVQVTDSSQLKGSSDQSRENFDSISNEDSEYHTLINQTEIQQLKERLILWDPSSLQTERTEIESDRFPKYPSGYSSMSRLFTEREKQMNNHLFPEKIEEFLGNPTRSIRSFFSDRWSELHLVSNATERFTRDQKLLKKQQDVFSFVPSRRSEKKEMVDIFKIITYLQNTVSIHPISSDRGCDMVPKDEPDMDSSNKISFLNKNPFCDLFHLFHDRNKGRYTLHHDFESEERFQEMADLFTLSITEPDLVYHKGFAFSIDSYGLDQKKFLNEVFNSRDESKKNSLLVLPHIFYEENESFYRRIRKKWVRISCRNGLEDPKPKIVVFASNNIMEAVNQYRLIRNLIQIQYSTYGYIRNLSNRFFLMNRSDRNFEYGIQRDQIGNDTLNHITIMKYMINQHLLNVKKSQKKWFDPLISRTERSMNRDPNAYRYKWSNGSKNFQEHLEHFVSEQKNRFQVVFDRLRINQHSIDWSKVIDKQDLSKSLHFFLSKSLLFLSKSLTFFFVSIGNIPIHRSEIHIYELKGPNDQLCNQLLESIGVQIVHLNKLKPFLLDDHDTSQRSKFLINGGTISAFLFNKIPKWMIDSLHTRNNRRKFFDNTDSYFSMISHDRDNWLNPVKPFHRSSLISSFYKANLLRFLNNPHHFCFYSNKRFPFYAEKTRIDNYDLTYGQFLHISFIRNKIFSLCVGKKKHVFLERDTISPIESQVSDIFIPNDFPQSGDETYNLYKSQPLSTYCQPLSDMNLSDSEGKNLHQYLSFNSNMGLIHTPCSEKDLPSAKKRNLCLKKCVEKRQMYRAFQRDSAFSNLSKWNLFQTYMPWFLTSAGCKYINFILLDTFSDPLPILSSSHQFVSFFYDIMHGSDISWSILQIPLWAILPRWNLISEISSKCLQNILLPEEMIHRNNESPVPLKWTHLRSPNAREFLYSILFLLLVAGYLVRTHLLFISRVSSELQTELEKIKSLMIPSYMIELRKLLDRYPPPELNSFWLKNLFLVALEQLGDSLEEIRSSASGGNMLLSGGPTYGVKSIRSKKKDLNINLIDIIYLISIIPNPINSITFSRNTRHLSRTSKEIYSLIRKNVNSDWIDDQIESWVANSDLIDDEEREFLVQFSTLTTEKRIDQILLSLTHSDHLSKNDSGYQMIEQPGSIYLRYLVDIQKRYLMNYEFNRSCLAERRIFLAHYQTITYSQTPCGANSSHFPSHGKPFSLRLALPPSRGILVIGFIGTGRSYFVKYRVTNSYVPFITVFPNKFLDDNKGYLIDDIDIDDRDDIDIDDRDDDDLDTELLTMPNVLTMYMTPKIDQFEITLPLELAKAMSPCIIWIPNIHDLYVNESNYLSLGLLVNHLPRDCERCSTRNILVIASTHIPQKVDPALIAPNKSNTCIKIRRLLIPQQRKHFFILSYTRGFRLEKKMSHTNGFGSITMGSNARDLVALTNEVLSISITQKKSIIDTNTIRSALHRQTWDLRSQVRSVQYHEILFYQIGRAVAQNVLLSNCSIDPISIYMKKKSCKEGDSYLSKWYFELGTSMKKLTILLYLLSCSAGSVAQDLWSPPGPDEQNWITSYGFVENDSDLVHGLLESALVGYSRTECSQFDNDRVTLLLRSEPRNQLDMMQNGSCSIVDQRFLYEKYESGFEEGEGEGTLDLQQIEEDEDLFNHIVWAPRLWRPHGNLFDCIERPKKLGFPYWVRSFRDKRIIYHKEDKLQENDSEFLRSGTVQYQTRDRSSKEQGFFRISQFIWDPADQFFFLFKDQPFVSVFSRRESFADEEMSKGLITSQTNSPTSIYKRWLIKNTQEKHFELLIHRQRWLRTNTNSSLSNGSFRSNTLSESYQYLSNLFLSNNGTLLDQMTKTLLRKRWLFPDEMKHLIHAPGERFPIP.

1600-1607 (GFIGTGRS) contributes to the ATP binding site.

It belongs to the Ycf2 family.

Its subcellular location is the plastid. It is found in the chloroplast stroma. Functionally, probable ATPase of unknown function. Its presence in a non-photosynthetic plant (Epifagus virginiana) and experiments in tobacco indicate that it has an essential function which is probably not related to photosynthesis. The polypeptide is Protein Ycf2 (Nymphaea alba (White water-lily)).